The primary structure comprises 136 residues: Large ribosomal subunit protein uL16 (136 aa).

It belongs to the universal ribosomal protein uL16 family. As to quaternary structure, part of the 50S ribosomal subunit.

Its function is as follows. Binds 23S rRNA and is also seen to make contacts with the A and possibly P site tRNAs. This chain is Large ribosomal subunit protein uL16, found in Mesomycoplasma hyopneumoniae (strain 232) (Mycoplasma hyopneumoniae).